The following is a 351-amino-acid chain: Biotin synthase (351 aa).

The Radical SAM core domain occupies 48-265 (NKVRIHILDN…LCMFRLINPD (218 aa)). Residues Cys63, Cys67, and Cys70 each coordinate [4Fe-4S] cluster. [2Fe-2S] cluster-binding residues include Cys107, Cys139, Cys199, and Arg269.

Belongs to the radical SAM superfamily. Biotin synthase family. In terms of assembly, homodimer. Requires [4Fe-4S] cluster as cofactor. [2Fe-2S] cluster is required as a cofactor.

It catalyses the reaction (4R,5S)-dethiobiotin + (sulfur carrier)-SH + 2 reduced [2Fe-2S]-[ferredoxin] + 2 S-adenosyl-L-methionine = (sulfur carrier)-H + biotin + 2 5'-deoxyadenosine + 2 L-methionine + 2 oxidized [2Fe-2S]-[ferredoxin]. Its pathway is cofactor biosynthesis; biotin biosynthesis; biotin from 7,8-diaminononanoate: step 2/2. Functionally, catalyzes the conversion of dethiobiotin (DTB) to biotin by the insertion of a sulfur atom into dethiobiotin via a radical-based mechanism. In Leptospira interrogans serogroup Icterohaemorrhagiae serovar copenhageni (strain Fiocruz L1-130), this protein is Biotin synthase.